Reading from the N-terminus, the 782-residue chain is MGRKDKSDREKKSKKRYYEDEEEDEEVIGGESQEAVPAAAGKQVDESSTKLDEYGAKDYRLQMLLKNDHSSRPLWVAPDGHIFLEAFSPVYKYAQDFLVAISEPVCRPTHAHEYKLTAYSLYAAVSVGLQTSDIIEYLQKLSKTSVPDGIVQFIKLCTVSYGKVKLVLKHNRYFVESAFPDVIQRLLQDTVIRDCRLRSAEGEETELITETISSKSAISKSQQDNGGPSSSQPADGQRSGTQVPEDIFSYYEQMDKEEEEEEETQTVSFEIRQEMIEELQKRCIQLEYPLLAEYDFRNDTVNPDINMDLKPTAVLRPYQEKSLRKMFGNGRARSGVIVLPCGAGKSLVGVTAACTVRKRCLVLGNSSVSVEQWKAQFKMWSTIDDSQICRFTSDAKDKPIGCSVAISTYSMLGHTTKRSWEAERVMEWMKSQEWGLIILDEVHTIPAKMFRRVLTIVQAHCKLGLTATLVREDDKIVDLNFLIGPKLYEANWMELQNNGYIAKVQCAEVWCPMSPEFYREYVAIKTKKRILLYTMNPNKFRACQFLIRFHERRNDKIIVFADNVFALKEYAIRLNKPYIYGPTSQGERMQILQNFKHNPKINTIFISKVGDTSFDLPEANVLIQISSHGGSRRQEAQRLGRVLRAKKGMVAEEYNAYFYSLVSQDTQEMAYSTKRQRFLVDQGYSFKVITKLAGMEEEDLMFSTRDEQQQLLQKVLAASDLDAEEEVVMGEVGGKPQFSRRAGTMSSMSGADDALYMEYQMPRGSKASVGKNIHPLFKRFRK.

The segment covering 1–11 (MGRKDKSDREK) has biased composition (basic and acidic residues). Disordered regions lie at residues 1–47 (MGRK…VDES) and 211–242 (TISSKSAISKSQQDNGGPSSSQPADGQRSGTQ). The Nuclear localization signal motif lies at 6-17 (KSDREKKSKKRY). The span at 19-28 (EDEEEDEEVI) shows a compositional bias: acidic residues. Low complexity predominate over residues 211-223 (TISSKSAISKSQQ). The span at 224–242 (DNGGPSSSQPADGQRSGTQ) shows a compositional bias: polar residues. The region spanning 326-487 (MFGNGRARSG…DLNFLIGPKL (162 aa)) is the Helicase ATP-binding domain. An ATP-binding site is contributed by 339-346 (LPCGAGKS). The DEVH box signature appears at 440–443 (DEVH). Residues 541–701 (RACQFLIRFH…LAGMEEEDLM (161 aa)) form the Helicase C-terminal domain.

This sequence belongs to the helicase family. RAD25/XPB subfamily. Component of the 7-subunit TFIIH core complex composed of XPB/ERCC3, XPD/ERCC2, GTF2H1, GTF2H2, GTF2H3, GTF2H4 and GTF2H5, which is active in NER. The core complex associates with the 3-subunit CDK-activating kinase (CAK) module composed of CCNH/cyclin H, CDK7 and MNAT1 to form the 10-subunit holoenzyme (holo-TFIIH) active in transcription. Interacts with PUF60. Interacts with ATF7IP. Interacts with Epstein-Barr virus EBNA2.

It localises to the nucleus. The enzyme catalyses Couples ATP hydrolysis with the unwinding of duplex DNA by translocating in the 3'-5' direction.. It catalyses the reaction ATP + H2O = ADP + phosphate + H(+). ATP-dependent 3'-5' DNA helicase/translocase; binds dsDNA rather than ssDNA, unzipping it in a translocase rather than classical helicase activity. Component of the general transcription and DNA repair factor IIH (TFIIH) core complex. When complexed to CDK-activating kinase (CAK), involved in RNA transcription by RNA polymerase II. The ATPase activity of XPB/ERCC3, but not its helicase activity, is required for DNA opening; it may wrap around the damaged DNA wedging it open, causing localized melting and twisting that allows XPD/ERCC2 helicase to anchor. The ATP-dependent helicase activity of XPB/ERCC3 may be required for promoter escape. Also involved in transcription-coupled nucleotide excision repair (NER) of damaged DNA. In NER, TFIIH acts by opening DNA around the lesion to allow the excision of the damaged oligonucleotide and its replacement by a new DNA fragment. This Danio rerio (Zebrafish) protein is General transcription and DNA repair factor IIH helicase/translocase subunit XPB (ercc3).